The chain runs to 424 residues: E3 ubiquitin-protein ligase RNF26 (424 aa).

5 helical membrane-spanning segments follow: residues 24-44 (LNFL…AFIY), 60-80 (GFLL…FGGL), 157-177 (ISTQ…TGPL), 183-203 (VVAA…ILLW), and 224-244 (VVFH…ILIV). The segment at 371 to 413 (CVICQDQSKTVLLLPCRHLCLCQACTEILMRHPVYHRNCPLCR) adopts an RING-type zinc-finger fold.

In terms of assembly, interacts with INCA1. Interacts with TMEM43, ENDOD1, TMEM33 and TMED1 to form a complex capable of modulating innate immune signaling through the cGAS-STING pathway. Interacts with UBE2J1; this interaction is important for SQSTM1 ubiquitination.

The protein localises to the endoplasmic reticulum membrane. It carries out the reaction S-ubiquitinyl-[E2 ubiquitin-conjugating enzyme]-L-cysteine + [acceptor protein]-L-lysine = [E2 ubiquitin-conjugating enzyme]-L-cysteine + N(6)-ubiquitinyl-[acceptor protein]-L-lysine.. It functions in the pathway protein modification; protein ubiquitination. E3 ubiquitin-protein ligase that plays a key role in endosome organization by retaining vesicles in the perinuclear cloud. Acts as a platform for perinuclear positioning of the endosomal system by mediating ubiquitination of SQSTM1 through interaction with the ubiquitin conjugating enzyme UBE2J1. Ubiquitinated SQSTM1 attracts specific vesicle-associated adapters, forming a molecular bridge that restrains cognate vesicles in the perinuclear region and organizes the endosomal pathway for efficient cargo transport. Also acts as a regulator of type I interferon production in response to viral infection by mediating the formation of 'Lys-11'-linked polyubiquitin chains on TMEM173/STING, leading to stabilize TMEM173/STING. Also required to limit type I interferon response by promoting autophagic degradation of IRF3. The polypeptide is E3 ubiquitin-protein ligase RNF26 (Mus musculus (Mouse)).